Consider the following 465-residue polypeptide: Ribulose bisphosphate carboxylase large chain (465 aa).

Lysine 4 is modified (N6,N6,N6-trimethyllysine). Substrate-binding residues include asparagine 113 and threonine 163. The Proton acceptor role is filled by lysine 165. Lysine 167 contributes to the substrate binding site. Residues lysine 191, aspartate 193, and glutamate 194 each contribute to the Mg(2+) site. The residue at position 191 (lysine 191) is an N6-carboxylysine. Histidine 284 serves as the catalytic Proton acceptor. Substrate is bound by residues arginine 285, histidine 317, and serine 369.

The protein belongs to the RuBisCO large chain family. Type I subfamily. In terms of assembly, heterohexadecamer of 8 large chains and 8 small chains; disulfide-linked. The disulfide link is formed within the large subunit homodimers. Mg(2+) is required as a cofactor. The disulfide bond which can form in the large chain dimeric partners within the hexadecamer appears to be associated with oxidative stress and protein turnover.

It localises to the plastid. The protein resides in the chloroplast. It catalyses the reaction 2 (2R)-3-phosphoglycerate + 2 H(+) = D-ribulose 1,5-bisphosphate + CO2 + H2O. It carries out the reaction D-ribulose 1,5-bisphosphate + O2 = 2-phosphoglycolate + (2R)-3-phosphoglycerate + 2 H(+). Its function is as follows. RuBisCO catalyzes two reactions: the carboxylation of D-ribulose 1,5-bisphosphate, the primary event in carbon dioxide fixation, as well as the oxidative fragmentation of the pentose substrate in the photorespiration process. Both reactions occur simultaneously and in competition at the same active site. This Eucommia ulmoides (Hardy rubber tree) protein is Ribulose bisphosphate carboxylase large chain.